The sequence spans 315 residues: Ornithine carbamoyltransferase (315 aa).

Carbamoyl phosphate-binding positions include 57–60 (STRT), glutamine 84, arginine 108, and 135–138 (HPCQ). Residues asparagine 166, aspartate 230, and 234 to 235 (SM) each bind L-ornithine. Carbamoyl phosphate is bound by residues 270–271 (CL) and arginine 298.

Belongs to the aspartate/ornithine carbamoyltransferase superfamily. OTCase family.

It is found in the cytoplasm. The enzyme catalyses carbamoyl phosphate + L-ornithine = L-citrulline + phosphate + H(+). It functions in the pathway amino-acid biosynthesis; L-arginine biosynthesis; L-arginine from L-ornithine and carbamoyl phosphate: step 1/3. Reversibly catalyzes the transfer of the carbamoyl group from carbamoyl phosphate (CP) to the N(epsilon) atom of ornithine (ORN) to produce L-citrulline. The protein is Ornithine carbamoyltransferase of Thermococcus kodakarensis (strain ATCC BAA-918 / JCM 12380 / KOD1) (Pyrococcus kodakaraensis (strain KOD1)).